The sequence spans 317 residues: Melanocyte-stimulating hormone receptor (317 aa).

The Extracellular portion of the chain corresponds to 1–37; it reads MPAQGSQRSXLGSLNSTLMATPSLGLAANQSGPQCLE. N-linked (GlcNAc...) asparagine glycosylation is found at asparagine 15 and asparagine 29. A helical membrane pass occupies residues 38–63; the sequence is VSVPDGLFLCLGLVSLVENMLVVAAI. The Cytoplasmic portion of the chain corresponds to 64-72; that stretch reads AKNRNLHSP. Residues 73–93 form a helical membrane-spanning segment; it reads MYCFICCLALSDLLVSISNVL. Topologically, residues 94–118 are extracellular; that stretch reads ETAVMLLLEAGALAVGATVVQQLDN. Residues 119 to 140 form a helical membrane-spanning segment; sequence VIDVLICSSMVSSLCFLGAIAM. Topologically, residues 141–163 are cytoplasmic; sequence DRYISIFYALRYHSIVTLSRAQW. A helical transmembrane segment spans residues 164–183; it reads ATAAVWAASILSSTLFIAYY. Over 184–191 the chain is Extracellular; sequence DRTVVLLC. The chain crosses the membrane as a helical span at residues 192 to 211; sequence LVVFFLAMLVLMAVLYAHML. The Cytoplasmic segment spans residues 212–240; sequence TQACQHVQGITRLHKRQHLVQQGFGLKGA. Residues 241-266 traverse the membrane as a helical segment; it reads ATLTILLGVFLLCWGPFFLHLTLIAV. Topologically, residues 267–279 are extracellular; sequence CPQHPTCSCVFKN. A helical transmembrane segment spans residues 280–300; the sequence is FKLFLALIICNAIVDPLIYAF. Topologically, residues 301–317 are cytoplasmic; the sequence is RSQELRKTLKEVLLFSW.

The protein belongs to the G-protein coupled receptor 1 family. Interacts with MGRN1, but does not undergo MGRN1-mediated ubiquitination; this interaction competes with GNAS-binding and thus inhibits agonist-induced cAMP production. Interacts with OPN3; the interaction results in a decrease in MC1R-mediated cAMP signaling and ultimately a decrease in melanin production in melanocytes.

Its subcellular location is the cell membrane. Receptor for MSH (alpha, beta and gamma) and ACTH. The activity of this receptor is mediated by G proteins which activate adenylate cyclase. Mediates melanogenesis, the production of eumelanin (black/brown) and phaeomelanin (red/yellow), via regulation of cAMP signaling in melanocytes. The chain is Melanocyte-stimulating hormone receptor (MC1R) from Galago senegalensis (Northern lesser bushbaby).